Reading from the N-terminus, the 814-residue chain is Rho GTPase-activating protein 44 (814 aa).

The BAR domain maps to 14-249 (QTVGRAEKTE…IKAQQEAWVE (236 aa)). The region spanning 255–445 (KPLEEHLMIS…PIIQHADWFF (191 aa)) is the Rho-GAP domain. Disordered stretches follow at residues 467–493 (ANYSSMPSPDMDPADRRQPEQARRPLS), 528–769 (RGSS…MSTD), and 784–814 (STLRLSPLEHARRHSATDKRDSEEESESTAL). Residues 479-489 (PADRRQPEQAR) show a composition bias toward basic and acidic residues. Residue serine 493 is modified to Phosphoserine. Composition is skewed to low complexity over residues 567-581 (SPATPAPALSPSGAS), 598-612 (SPGSGQKGSPGSIQG), 622-637 (PQPAASPSQLPADQSP), 684-704 (SPYGLSYPPGYSMASGQLSPA), and 741-752 (SVSLSASSPQST). The segment at 727-814 (KPRQRPTLPP…SEEESESTAL (88 aa)) is interaction with BST2. A compositionally biased stretch (basic and acidic residues) spans 790-805 (PLEHARRHSATDKRDS). Serine 805 is subject to Phosphoserine. Positions 811–814 (STAL) match the PDZ-binding motif.

In terms of assembly, interacts with BST2 (via cytoplasmic domain). Interacts (probably via PDZ-binding motif) with SHANK3 (via PDZ domain); the interaction takes place in dendritic spines and promotes GRIA1 exocytosis. As to expression, specifically expressed in brain (at protein level). Detected in olfactory bulb, cortex, hippocampus, diencephalon and cerebellum (at protein level). Expressed in hippocampal neurons (at protein level).

The protein resides in the cell projection. It is found in the dendritic spine. It localises to the recycling endosome. The protein localises to the presynapse. Its subcellular location is the dendrite. Its function is as follows. GTPase-activating protein (GAP) that stimulates the GTPase activity of Rho-type GTPases. Thereby, controls Rho-type GTPases cycling between their active GTP-bound and inactive GDP-bound states. Acts as a GAP at least for CDC42 and RAC1. In neurons, is involved in dendritic spine formation and synaptic plasticity in a specific RAC1-GAP activity. Limits the initiation of exploratory dendritic filopodia. Recruited to actin-patches that seed filopodia, binds specifically to plasma membrane sections that are deformed inward by acto-myosin mediated contractile forces. Acts through GAP activity on RAC1 to reduce actin polymerization necessary for filopodia formation. In association with SHANK3, promotes GRIA1 exocytosis from recycling endosomes and spine morphological changes associated to long-term potentiation. In Mus musculus (Mouse), this protein is Rho GTPase-activating protein 44.